Reading from the N-terminus, the 151-residue chain is 3-hydroxyacyl-[acyl-carrier-protein] dehydratase FabZ (151 aa).

Residue His56 is part of the active site.

Belongs to the thioester dehydratase family. FabZ subfamily.

The protein resides in the cytoplasm. The enzyme catalyses a (3R)-hydroxyacyl-[ACP] = a (2E)-enoyl-[ACP] + H2O. In terms of biological role, involved in unsaturated fatty acids biosynthesis. Catalyzes the dehydration of short chain beta-hydroxyacyl-ACPs and long chain saturated and unsaturated beta-hydroxyacyl-ACPs. The polypeptide is 3-hydroxyacyl-[acyl-carrier-protein] dehydratase FabZ (Nitrobacter winogradskyi (strain ATCC 25391 / DSM 10237 / CIP 104748 / NCIMB 11846 / Nb-255)).